We begin with the raw amino-acid sequence, 466 residues long: FAD-dependent monooxygenase dpfgE (466 aa).

An N-terminal signal peptide occupies residues 1-23; that stretch reads MSQKPFRVIIVGGSVTGLTLAHS. Positions 35, 49, and 108 each coordinate FAD. N-linked (GlcNAc...) asparagine glycosylation is found at Asn128 and Asn192. FAD is bound by residues Asp312 and Ala325. The N-linked (GlcNAc...) asparagine glycan is linked to Asn376. The chain crosses the membrane as a helical span at residues 443-465; the sequence is GVVRNVFFLLAATVIVAWVCRLW.

Belongs to the paxM FAD-dependent monooxygenase family. FAD is required as a cofactor.

It localises to the membrane. It functions in the pathway secondary metabolite biosynthesis; terpenoid biosynthesis. Functionally, FAD-dependent monooxygenase; part of the gene cluster that mediates the biosynthesis of diterpenoid pyrones. The first step of the pathway is the synthesis of the alpha-pyrone moiety by the polyketide synthase dpfgA via condensation of one acetyl-CoA starter unit with 3 malonyl-CoA units and 2 methylations. The alpha-pyrone is then combined with geranylgeranyl pyrophosphate (GGPP) formed by the GGPP synthase dpfgD through the action of the prenyltransferase dpfgC to yield a linear alpha-pyrone diterpenoid. Subsequent steps in the diterpenoid pyrone biosynthetic pathway involve the decalin core formation, which is initiated by the epoxidation of the C10-C11 olefin by the FAD-dependent oxidoreductase dpfgE, and is followed by a cyclization cascade catalyzed by the terpene cyclase dpfgB. The short chain dehydrogenase/reductase dpfgG then oxidizes the 8S hydroxy group to a ketone and the short chain dehydrogenase/reductase dpfgH reduces the ketone to the 8R hydroxy group to yield higginsianin B. Higginsianin B is further methylated by the methyltransferase dpfgI to produce the intermediate named FDDP B. The cytochrome P450 monooxygenase dfgpJ then catalyzes a three-step oxidation at C-27 to generate a carboxylic acid as well as C-26 hydroxylation. Finally, methyltransferase dpfgK methylates the carboxylic acid generated by dpfgJ, yielding the final diterpenoid pyrones from the pathway which were named FDDP D and FDDP E. The protein is FAD-dependent monooxygenase dpfgE of Gibberella zeae (strain ATCC MYA-4620 / CBS 123657 / FGSC 9075 / NRRL 31084 / PH-1) (Wheat head blight fungus).